Here is a 223-residue protein sequence, read N- to C-terminus: Endo-1,4-beta-xylanase 2 (223 aa).

An N-terminal signal peptide occupies residues methionine 1–alanine 19. Positions alanine 20–arginine 33 are excised as a propeptide. A Pyrrolidone carboxylic acid modification is found at glutamine 34. A GH11 domain is found at glutamine 34–valine 222. 2 N-linked (GlcNAc...) asparagine glycosylation sites follow: asparagine 71 and asparagine 94. Substrate contacts are provided by tyrosine 106 and tyrosine 110. Catalysis depends on glutamate 119, which acts as the Nucleophile. Substrate contacts are provided by tyrosine 121, arginine 155, proline 159, glutamine 169, and tyrosine 204. Catalysis depends on glutamate 210, which acts as the Proton donor.

Belongs to the glycosyl hydrolase 11 (cellulase G) family.

The protein localises to the secreted. It catalyses the reaction Endohydrolysis of (1-&gt;4)-beta-D-xylosidic linkages in xylans.. It participates in glycan degradation; xylan degradation. Functionally, glycoside hydrolase involved in the hydrolysis of xylan, a major plant cell wall hemicellulose made up of 1,4-beta-linked D-xylopyranose residues. Catalyzes the endohydrolysis of the main-chain 1,4-beta-glycosidic bonds connecting the xylose subunits yielding various xylooligosaccharides and xylose. The catalysis proceeds by a double-displacement reaction mechanism with a putative covalent glycosyl-enzyme intermediate, with retention of the anomeric configuration. Produces xylobiose and xylose as the main degradation products. The chain is Endo-1,4-beta-xylanase 2 from Hypocrea jecorina (strain ATCC 56765 / BCRC 32924 / NRRL 11460 / Rut C-30) (Trichoderma reesei).